The following is a 469-amino-acid chain: Solute carrier family 52, riboflavin transporter, member 3 (469 aa).

Topologically, residues 1 to 2 (MA) are cytoplasmic. The helical transmembrane segment at 3-23 (FLMHLLVCVFGMGSWVTINGL) threads the bilayer. The Extracellular portion of the chain corresponds to 24–43 (WVELPLLVMELPEGWYLPSY). The helical transmembrane segment at 44–64 (LTVVIQLANIGPLLVTLLHHF) threads the bilayer. The Cytoplasmic segment spans residues 65–71 (RPSCLSE). The helical transmembrane segment at 72-92 (VPIIFTLLGVGTVTCIIFAFL) threads the bilayer. The Extracellular segment spans residues 93–97 (WNMTS). N-linked (GlcNAc...) asparagine glycosylation occurs at Asn-94. A helical membrane pass occupies residues 98–118 (WVLDGHHSIAFLVLTFFLALV). Topologically, residues 119–137 (DCTSSVTFLPFMSRLPTYY) are cytoplasmic. The helical transmembrane segment at 138–158 (LTTFFVGEGLSGLLPALVALA) threads the bilayer. Residues 159-220 (QGSGLTTCVN…SRYLPAHFSP (62 aa)) are Extracellular-facing. The N-linked (GlcNAc...) asparagine glycan is linked to Asn-168. Residues 221–241 (LVFFLLLSIMMACCLVAFFVL) traverse the membrane as a helical segment. The Cytoplasmic portion of the chain corresponds to 242–292 (QRQPRCWEASVEDLLNDQVTLHSIRPREENDLGPAGTVDSSQGQGYLEEKA). Phosphoserine is present on Ser-251. The helical transmembrane segment at 293-313 (APCCPAHLAFIYTLVAFVNAL) threads the bilayer. Residues 314-335 (TNGMLPSVQTYSCLSYGPVAYH) are Extracellular-facing. A helical transmembrane segment spans residues 336 to 356 (LAATLSIVANPLASLVSMFLP). Residues 357–359 (NRS) lie on the Cytoplasmic side of the membrane. The chain crosses the membrane as a helical span at residues 360-380 (LLFLGVLSVLGTCFGGYNMAM). At 381 to 396 (AVMSPCPLLQGHWGGE) the chain is on the extracellular side. Cys-386 and Cys-463 are oxidised to a cystine. A helical transmembrane segment spans residues 397 to 417 (VLIVASWVLFSGCLSYVKVML). Topologically, residues 418–427 (GVVLRDLSRS) are cytoplasmic. Residues 428–448 (ALLWCGAAVQLGSLLGALLMF) form a helical membrane-spanning segment. The Extracellular segment spans residues 449–469 (PLVNVLRLFSSADFCNLHCPA).

It belongs to the riboflavin transporter family. In terms of tissue distribution, predominantly expressed in testis. Highly expressed in small intestine and prostate.

The protein localises to the apical cell membrane. The protein resides in the cell membrane. Its subcellular location is the nucleus membrane. It localises to the cytoplasm. The enzyme catalyses riboflavin(in) = riboflavin(out). Activity is strongly inhibited by riboflavin analogs, such as lumiflavin, flavin mononucleotide (FMN), flavin adenine dinucleotide (FAD), by methylene blue, and to a lesser extent by amiloride. Riboflavin transport is Na(+)-independent at low pH but significantly reduced by Na(+) depletion under neutral pH conditions. Functionally, plasma membrane transporter mediating the uptake by cells of the water soluble vitamin B2/riboflavin that plays a key role in biochemical oxidation-reduction reactions of the carbohydrate, lipid, and amino acid metabolism. Humans are unable to synthesize vitamin B2/riboflavin and must obtain it via intestinal absorption. The polypeptide is Solute carrier family 52, riboflavin transporter, member 3 (SLC52A3) (Homo sapiens (Human)).